The primary structure comprises 55 residues: Large ribosomal subunit protein bL33 (55 aa).

It belongs to the bacterial ribosomal protein bL33 family.

This Ruegeria pomeroyi (strain ATCC 700808 / DSM 15171 / DSS-3) (Silicibacter pomeroyi) protein is Large ribosomal subunit protein bL33.